Reading from the N-terminus, the 478-residue chain is Glycogen synthase (478 aa).

An ADP-alpha-D-glucose-binding site is contributed by K16.

This sequence belongs to the glycosyltransferase 1 family. Bacterial/plant glycogen synthase subfamily.

It carries out the reaction [(1-&gt;4)-alpha-D-glucosyl](n) + ADP-alpha-D-glucose = [(1-&gt;4)-alpha-D-glucosyl](n+1) + ADP + H(+). Its pathway is glycan biosynthesis; glycogen biosynthesis. Its function is as follows. Synthesizes alpha-1,4-glucan chains using ADP-glucose. In Lachnospira eligens (strain ATCC 27750 / DSM 3376 / VPI C15-48 / C15-B4) (Eubacterium eligens), this protein is Glycogen synthase.